The following is a 172-amino-acid chain: Translation initiation factor IF-3 (172 aa).

This sequence belongs to the IF-3 family. Monomer.

Its subcellular location is the cytoplasm. Its function is as follows. IF-3 binds to the 30S ribosomal subunit and shifts the equilibrium between 70S ribosomes and their 50S and 30S subunits in favor of the free subunits, thus enhancing the availability of 30S subunits on which protein synthesis initiation begins. This chain is Translation initiation factor IF-3, found in Bartonella tribocorum (strain CIP 105476 / IBS 506).